A 419-amino-acid chain; its full sequence is Tyrosine--tRNA ligase (419 aa).

Position 34 (Tyr-34) interacts with L-tyrosine. Residues 39-48 (PSGDSMHIGH) carry the 'HIGH' region motif. L-tyrosine contacts are provided by Tyr-168 and Gln-172. The 'KMSKS' region signature appears at 230–234 (KFGKS). Lys-233 lines the ATP pocket. Positions 352 to 418 (ANLVDWLVTL…GKKKYFLVSY (67 aa)) constitute an S4 RNA-binding domain.

The protein belongs to the class-I aminoacyl-tRNA synthetase family. TyrS type 1 subfamily. Homodimer.

It localises to the cytoplasm. It catalyses the reaction tRNA(Tyr) + L-tyrosine + ATP = L-tyrosyl-tRNA(Tyr) + AMP + diphosphate + H(+). Its function is as follows. Catalyzes the attachment of tyrosine to tRNA(Tyr) in a two-step reaction: tyrosine is first activated by ATP to form Tyr-AMP and then transferred to the acceptor end of tRNA(Tyr). The protein is Tyrosine--tRNA ligase of Listeria monocytogenes serovar 1/2a (strain ATCC BAA-679 / EGD-e).